Consider the following 101-residue polypeptide: Small ribosomal subunit protein uS10 (101 aa).

Belongs to the universal ribosomal protein uS10 family. Part of the 30S ribosomal subunit.

Involved in the binding of tRNA to the ribosomes. The protein is Small ribosomal subunit protein uS10 of Mycobacteroides abscessus (strain ATCC 19977 / DSM 44196 / CCUG 20993 / CIP 104536 / JCM 13569 / NCTC 13031 / TMC 1543 / L948) (Mycobacterium abscessus).